Here is a 130-residue protein sequence, read N- to C-terminus: Small ribosomal subunit protein uS11 (130 aa).

It belongs to the universal ribosomal protein uS11 family. Part of the 30S ribosomal subunit. Interacts with proteins S7 and S18. Binds to IF-3.

In terms of biological role, located on the platform of the 30S subunit, it bridges several disparate RNA helices of the 16S rRNA. Forms part of the Shine-Dalgarno cleft in the 70S ribosome. The chain is Small ribosomal subunit protein uS11 from Tropheryma whipplei (strain TW08/27) (Whipple's bacillus).